The following is a 340-amino-acid chain: Nicotianamine synthase 9 (340 aa).

It belongs to the nicotianamine synthase (NAS)-like family. As to quaternary structure, homotrimer.

It catalyses the reaction 3 S-adenosyl-L-methionine = nicotianamine + 3 S-methyl-5'-thioadenosine + 3 H(+). Its function is as follows. Synthesizes nicotianamine, a polyamine that is the first intermediate in the synthesis of the phytosiderophores of the mugineic acid type found in gramineae which serves as a sensor for the physiological iron status within the plant, and/or might be involved in the transport of iron. The protein is Nicotianamine synthase 9 (NAS9) of Hordeum vulgare (Barley).